Reading from the N-terminus, the 333-residue chain is MELIVKEESKTDYNYGSDPYNRDIKTLLNTGLVVIDKPSGPTSHEVAAWVRNMLNLVKAGHGGTLDPKVTGALPVALGNTTKCVPIWHIPPKEYVCLMHLHDDAKVEDIENIFKEFTGRIHQRPPLKAAVKRSLRIRKIYEIEILEIDGRDILFRTKCQSGTYLRKLVDDMGEALGTSAHMQELRRTISGPFYENEAVYLQDLLDAYIFWKEDGNEEELRKLVKPLEYGLQHLKKIIVKDSAVDAVCHGATLYSSGVSKIEKGIGTDEVVLIETLKGEAVAVGKPLMNTKDMLKTEEGEVVEITRVIMEPGIYPRIWKKRNKNDKTKAESKKK.

The Nucleophile role is filled by D66. The region spanning 233 to 308 (LKKIIVKDSA…EVVEITRVIM (76 aa)) is the PUA domain.

It belongs to the pseudouridine synthase TruB family. Type 2 subfamily.

The enzyme catalyses uridine(55) in tRNA = pseudouridine(55) in tRNA. Its function is as follows. Could be responsible for synthesis of pseudouridine from uracil-55 in the psi GC loop of transfer RNAs. This Methanococcus maripaludis (strain C5 / ATCC BAA-1333) protein is Probable tRNA pseudouridine synthase B.